The primary structure comprises 100 residues: NADH-quinone oxidoreductase subunit K (100 aa).

The next 3 helical transmembrane spans lie at 4-24 (YEYY…GIII), 29-49 (IAML…FVAF), and 60-80 (VFVF…LGLI).

It belongs to the complex I subunit 4L family. As to quaternary structure, NDH-1 is composed of 14 different subunits. Subunits NuoA, H, J, K, L, M, N constitute the membrane sector of the complex.

The protein resides in the cell inner membrane. The catalysed reaction is a quinone + NADH + 5 H(+)(in) = a quinol + NAD(+) + 4 H(+)(out). In terms of biological role, NDH-1 shuttles electrons from NADH, via FMN and iron-sulfur (Fe-S) centers, to quinones in the respiratory chain. The immediate electron acceptor for the enzyme in this species is believed to be ubiquinone. Couples the redox reaction to proton translocation (for every two electrons transferred, four hydrogen ions are translocated across the cytoplasmic membrane), and thus conserves the redox energy in a proton gradient. The protein is NADH-quinone oxidoreductase subunit K of Persephonella marina (strain DSM 14350 / EX-H1).